Reading from the N-terminus, the 330-residue chain is 2-alkyl-3-oxoalkanoate reductase (330 aa).

Tyrosine 139 serves as the catalytic Proton acceptor. Residue lysine 143 participates in NADP(+) binding.

This sequence belongs to the 3-beta-HSD family. As to quaternary structure, homodimer.

It catalyses the reaction a (2R,3S)-2-alkyl-3-hydroxyalkanoate + NADP(+) = an (R)-2-alkyl-3-oxoalkanoate + NADPH + H(+). Involved in olefin biosynthesis. Catalyzes the reversible stereospecific NADPH-dependent reduction of 2-alkyl-3-oxoalkanoic acids to 2-alkyl-3-hydroxyalkanoic acids. In the oxidative direction, syn-2-decyl-3-hydroxytetradecanoic acid is the preferred substrate. In the reductive direction, (2R/S)-2-hexyl-3-ketodecanoic acid is accepted as substrate. The protein is 2-alkyl-3-oxoalkanoate reductase of Stenotrophomonas maltophilia (strain K279a).